Consider the following 210-residue polypeptide: Putative O-methyltransferase MSMEG_5073/MSMEI_4947 (210 aa).

S-adenosyl-L-methionine-binding positions include valine 37, glutamate 59, 61–62 (GT), serine 67, aspartate 85, and valine 86. Aspartate 133 contacts substrate. Aspartate 135 is an S-adenosyl-L-methionine binding site.

This sequence belongs to the class I-like SAM-binding methyltransferase superfamily. Cation-dependent O-methyltransferase family.

This chain is Putative O-methyltransferase MSMEG_5073/MSMEI_4947, found in Mycolicibacterium smegmatis (strain ATCC 700084 / mc(2)155) (Mycobacterium smegmatis).